The following is a 741-amino-acid chain: MSKMRVYEYAKKQNVPSKDVIHKLKEMNIEVNNHMAMLEADVVEKLDHQYRPKAEKKTETKNEKKAEKKTDKPKRPMPAKTADFSDEEIFDDVKEAAKPAKKKGAAKGKETKRTEAQQQEKKAFQAAKKKGKGPAKGKKQAAPAAKQVPQPAKKEKELPKKITFEGSLTVAELAKKLGREPSEIIKKLFMLGVMATINQDLDKDAIELICSDYGVEVEEKVTIDETNFEAIEIADAPEDLVERPPVVTIMGHVDHGKTTLLDAIRHSKVTEQEAGGITQHIGAYQVTVNDKKITFLDTPGHEAFTTMRARGRQVTDIVILVVAADDGVMPQTVEAINHAKAANVPIIVAINKMDKPEANPDRVMQELMEYNLVPEEWGGDTIFCKLSAKTKEGLDHLLEMILLVSEMEELKANPNRRAVGTVIEAKLDKGRGPVATLLVQAGTLKVGDPIVVGTTYGRVRAMVNDSGRRVKEAGPSMPVEITGLHDVPQAGDRFMVFEDEKKARQIGEARAQRQLQEQRSVKTRVSLDDLFEQIKQGEMKELNLIVKADVQGSVEALVAALQKIDVEGVRVKIIHAAVGAITESDISLATASNAIVIGFNVRPDANAKRAAESEKVDIRLHRIIYNVIEEIEAAMKGMLDPEYEEKVIGQAEVRQTFKVSKVGTIAGCYVTDGKITRDSKVRLIRQGIVVYEGEIDSLKRYKDDVREVAQGYECGLTIKNFNDIKEGDVIEAYVMQEVARA.

Basic and acidic residues-rich tracts occupy residues 48-74 and 107-123; these read HQYRPKAEKKTETKNEKKAEKKTDKPK and KGKETKRTEAQQQEKKA. The tract at residues 48-158 is disordered; sequence HQYRPKAEKK…PQPAKKEKEL (111 aa). Positions 127-139 are enriched in basic residues; the sequence is AKKKGKGPAKGKK. A compositionally biased stretch (low complexity) spans 140–151; the sequence is QAAPAAKQVPQP. One can recognise a tr-type G domain in the interval 242–411; the sequence is ERPPVVTIMG…LLVSEMEELK (170 aa). A G1 region spans residues 251 to 258; sequence GHVDHGKT. Position 251–258 (251–258) interacts with GTP; that stretch reads GHVDHGKT. Positions 276–280 are G2; it reads GITQH. The G3 stretch occupies residues 297–300; the sequence is DTPG. GTP contacts are provided by residues 297–301 and 351–354; these read DTPGH and NKMD. Residues 351 to 354 form a G4 region; that stretch reads NKMD. The tract at residues 387–389 is G5; sequence SAK.

The protein belongs to the TRAFAC class translation factor GTPase superfamily. Classic translation factor GTPase family. IF-2 subfamily.

The protein resides in the cytoplasm. One of the essential components for the initiation of protein synthesis. Protects formylmethionyl-tRNA from spontaneous hydrolysis and promotes its binding to the 30S ribosomal subunits. Also involved in the hydrolysis of GTP during the formation of the 70S ribosomal complex. This is Translation initiation factor IF-2 (infB) from Geobacillus stearothermophilus (Bacillus stearothermophilus).